Reading from the N-terminus, the 638-residue chain is MPPVTPLLDTVSSPADTRGLSIAQLRQLADEVRAETIDAVSQTGGHLGAGLGVVELTVALHHVYETPKDILIWDVGHQAYPHKILTGRRDRIRTLRQGGGLSGFTKRAESDYDPFGAAHAATSISAALGFCAARDREGRDNKVVAVIGDGSMSAGMAYEAMNNAYETTKQLTVILNDNDMSIAPPVGGMSAYMARLVSGGGYQSLRNLGKAVSRAFPRPLQEAARKAEEYARGMVTGGTFFEELGFYYVGPIDGHDMDALVHVLQNARKIDDKPVLVHVVTQKGKGYAPAEKAADKYHGVVKFDVVTGAQAKSQAAAPSYTKVFAQELVKHAERDERVVAITAAMPSGTGLDLFGQRFPERTFDVGIAEQHAVTFAAGLAADGMKPFAAIYSTFLQRGYDQVVHDVAIQSLPVRFAIDRAGLVGADGPTHAGSFDVGFMGQLPGMVVMGPADEAELARAIATAVAIDDRPSAFRYPRGEGVGVEIPALADPLEIGRGRIVREGTAVAILSFGTRLGESLKAADMLAARGLSATVADARFAKPLDVDLLLRLAREHEALITVEEGAVGGFGGFVLHALAEHGALDRGLKIRTLTLPDIFQDQDKPEAMYAQAGLDAEGIVRAALAALGIDNASVKGRRA.

Thiamine diphosphate contacts are provided by residues His77 and 118–120; that span reads AHA. Asp149 contributes to the Mg(2+) binding site. Residues 150–151, Asn178, Tyr287, and Glu369 each bind thiamine diphosphate; that span reads GS. Position 178 (Asn178) interacts with Mg(2+).

It belongs to the transketolase family. DXPS subfamily. Homodimer. It depends on Mg(2+) as a cofactor. Requires thiamine diphosphate as cofactor.

It carries out the reaction D-glyceraldehyde 3-phosphate + pyruvate + H(+) = 1-deoxy-D-xylulose 5-phosphate + CO2. The protein operates within metabolic intermediate biosynthesis; 1-deoxy-D-xylulose 5-phosphate biosynthesis; 1-deoxy-D-xylulose 5-phosphate from D-glyceraldehyde 3-phosphate and pyruvate: step 1/1. Its function is as follows. Catalyzes the acyloin condensation reaction between C atoms 2 and 3 of pyruvate and glyceraldehyde 3-phosphate to yield 1-deoxy-D-xylulose-5-phosphate (DXP). This chain is 1-deoxy-D-xylulose-5-phosphate synthase, found in Phenylobacterium zucineum (strain HLK1).